A 193-amino-acid chain; its full sequence is Fe/S biogenesis protein NfuA (193 aa).

2 residues coordinate [4Fe-4S] cluster: Cys149 and Cys152.

Belongs to the NfuA family. Homodimer. [4Fe-4S] cluster is required as a cofactor.

In terms of biological role, involved in iron-sulfur cluster biogenesis. Binds a 4Fe-4S cluster, can transfer this cluster to apoproteins, and thereby intervenes in the maturation of Fe/S proteins. Could also act as a scaffold/chaperone for damaged Fe/S proteins. This Psychromonas ingrahamii (strain DSM 17664 / CCUG 51855 / 37) protein is Fe/S biogenesis protein NfuA.